The following is a 498-amino-acid chain: 3-octaprenyl-4-hydroxybenzoate carboxy-lyase (498 aa).

Asparagine 175 contacts Mn(2+). Residues 178–180, 192–194, and 197–198 contribute to the prenylated FMN site; these read IYR, RWL, and RG. Position 241 (glutamate 241) interacts with Mn(2+). Aspartate 290 (proton donor) is an active-site residue.

It belongs to the UbiD family. In terms of assembly, homohexamer. It depends on prenylated FMN as a cofactor. Mn(2+) is required as a cofactor.

Its subcellular location is the cell membrane. The catalysed reaction is a 4-hydroxy-3-(all-trans-polyprenyl)benzoate + H(+) = a 2-(all-trans-polyprenyl)phenol + CO2. It functions in the pathway cofactor biosynthesis; ubiquinone biosynthesis. Catalyzes the decarboxylation of 3-octaprenyl-4-hydroxy benzoate to 2-octaprenylphenol, an intermediate step in ubiquinone biosynthesis. This Yersinia pestis bv. Antiqua (strain Antiqua) protein is 3-octaprenyl-4-hydroxybenzoate carboxy-lyase.